The chain runs to 373 residues: Cobalt-precorrin-5B C(1)-methyltransferase (373 aa).

The protein belongs to the CbiD family.

It carries out the reaction Co-precorrin-5B + S-adenosyl-L-methionine = Co-precorrin-6A + S-adenosyl-L-homocysteine. It functions in the pathway cofactor biosynthesis; adenosylcobalamin biosynthesis; cob(II)yrinate a,c-diamide from sirohydrochlorin (anaerobic route): step 6/10. Functionally, catalyzes the methylation of C-1 in cobalt-precorrin-5B to form cobalt-precorrin-6A. The protein is Cobalt-precorrin-5B C(1)-methyltransferase of Listeria welshimeri serovar 6b (strain ATCC 35897 / DSM 20650 / CCUG 15529 / CIP 8149 / NCTC 11857 / SLCC 5334 / V8).